The following is a 156-amino-acid chain: Cellulose synthase operon protein D (156 aa).

It participates in glycan metabolism; bacterial cellulose biosynthesis. In terms of biological role, may have a major role in the perfection of crystallization, involved either in the pore structure itself or in the organization of the pores within the linear array of terminal synthesizing complexes (TCs). This chain is Cellulose synthase operon protein D (acsD), found in Komagataeibacter xylinus (Gluconacetobacter xylinus).